Here is a 179-residue protein sequence, read N- to C-terminus: Large ribosomal subunit protein uL5 (179 aa).

It belongs to the universal ribosomal protein uL5 family. In terms of assembly, part of the 50S ribosomal subunit; part of the 5S rRNA/L5/L18/L25 subcomplex. Contacts the 5S rRNA and the P site tRNA. Forms a bridge to the 30S subunit in the 70S ribosome.

In terms of biological role, this is one of the proteins that bind and probably mediate the attachment of the 5S RNA into the large ribosomal subunit, where it forms part of the central protuberance. In the 70S ribosome it contacts protein S13 of the 30S subunit (bridge B1b), connecting the 2 subunits; this bridge is implicated in subunit movement. Contacts the P site tRNA; the 5S rRNA and some of its associated proteins might help stabilize positioning of ribosome-bound tRNAs. The chain is Large ribosomal subunit protein uL5 from Parasynechococcus marenigrum (strain WH8102).